Consider the following 154-residue polypeptide: Superoxide dismutase [Cu-Zn] (154 aa).

The Cu cation site is built by histidine 47 and histidine 64. A disulfide bridge links cysteine 58 with cysteine 147. Histidine 64, histidine 72, histidine 81, and aspartate 84 together coordinate Zn(2+). Histidine 121 serves as a coordination point for Cu cation. Residue arginine 144 coordinates substrate.

It belongs to the Cu-Zn superoxide dismutase family. As to quaternary structure, homodimer. Cu cation is required as a cofactor. It depends on Zn(2+) as a cofactor.

Its subcellular location is the cytoplasm. The enzyme catalyses 2 superoxide + 2 H(+) = H2O2 + O2. Its function is as follows. Destroys radicals which are normally produced within the cells and which are toxic to biological systems. This is Superoxide dismutase [Cu-Zn] (SOD1) from Pleurocordyceps sinensis (Polycephalomyces sinensis).